A 383-amino-acid chain; its full sequence is D-alanine--D-alanine ligase (383 aa).

In terms of domain architecture, ATP-grasp spans 164 to 373; the sequence is KLAFQAAGLE…YSALIDELIT (210 aa). Residue 196 to 251 coordinates ATP; sequence VAELGFPVFVKPARAGSSFGITRVDEPSQLDAAIATAREHDLKLVVEAGIDGREIE. 3 residues coordinate Mg(2+): D327, E340, and N342.

It belongs to the D-alanine--D-alanine ligase family. It depends on Mg(2+) as a cofactor. Requires Mn(2+) as cofactor.

It localises to the cytoplasm. It catalyses the reaction 2 D-alanine + ATP = D-alanyl-D-alanine + ADP + phosphate + H(+). The protein operates within cell wall biogenesis; peptidoglycan biosynthesis. Cell wall formation. The protein is D-alanine--D-alanine ligase of Kocuria rhizophila (strain ATCC 9341 / DSM 348 / NBRC 103217 / DC2201).